We begin with the raw amino-acid sequence, 324 residues long: Chlorophyllase-1 (324 aa).

The short motif at 136–140 (GHSRG) is the GXSXG element. Serine 138 (nucleophile) is an active-site residue. Residues aspartate 168 and histidine 243 each act as charge relay system in the active site.

The protein belongs to the AB hydrolase superfamily. Lipase family. Expressed in seedlings, leaves, flowers and siliques, but not in roots.

The protein resides in the cytoplasm. It localises to the cytosol. It catalyses the reaction a chlorophyll + H2O = a chlorophyllide + phytol + H(+). The enzyme catalyses chlorophyll a + H2O = phytol + chlorophyllide a + H(+). Its pathway is porphyrin-containing compound metabolism; chlorophyll degradation. In terms of biological role, catalyzes the hydrolysis of ester bond in chlorophyll to yield chlorophyllide and phytol. Shows a preferential activity toward chlorophyll a. Does not seem to be required for chlorophyll degradation during senescence. May modulate the balance between different plant defense pathways. The protein is Chlorophyllase-1 of Arabidopsis thaliana (Mouse-ear cress).